Here is a 130-residue protein sequence, read N- to C-terminus: MTEKLGILAIGHGSKLPYNKEVVTQIADYIARKHSDVVVRAGFMENSEPTLGEAIEGFSGTGVTKIAAVPVFLASGVHITKDIPRILSLDENGCGTLEIDGKTVPLCYANPLGADELIADLVFKRVQEAL.

Residue His12 is the Proton acceptor of the active site. His12 serves as a coordination point for Co(2+). His12 contacts Ni(2+). Residues Glu48 and 73–78 (LASGVH) contribute to the substrate site. A Co(2+)-binding site is contributed by His78. A Ni(2+)-binding site is contributed by His78.

This sequence belongs to the CbiX family. CbiXS subfamily. Homotetramer; dimer of dimers.

It catalyses the reaction Co-sirohydrochlorin + 2 H(+) = sirohydrochlorin + Co(2+). It carries out the reaction Ni-sirohydrochlorin + 2 H(+) = sirohydrochlorin + Ni(2+). Its pathway is cofactor biosynthesis; adenosylcobalamin biosynthesis; cob(II)yrinate a,c-diamide from sirohydrochlorin (anaerobic route): step 1/10. Its function is as follows. Catalyzes the insertion of Co(2+) into sirohydrochlorin as part of the anaerobic pathway to cobalamin biosynthesis. Involved in the biosynthesis of the unique nickel-containing tetrapyrrole coenzyme F430, the prosthetic group of methyl-coenzyme M reductase (MCR), which plays a key role in methanogenesis and anaerobic methane oxidation. Catalyzes the insertion of Ni(2+) into sirohydrochlorin to yield Ni-sirohydrochlorin. In Methanosarcina barkeri (strain Fusaro / DSM 804), this protein is Sirohydrochlorin cobaltochelatase.